Reading from the N-terminus, the 244-residue chain is Large ribosomal subunit protein uL30 (244 aa).

The tract at residues 1–37 (MAPTKKVPQVPETVLKRRKQRADARTKAAQHKVTVAA) is disordered.

It belongs to the universal ribosomal protein uL30 family.

Functionally, binds to G-rich structures in 28S rRNA and in mRNAs. Plays a regulatory role in the translation apparatus; inhibits cell-free translation of mRNAs. This Caenorhabditis elegans protein is Large ribosomal subunit protein uL30 (rpl-7).